Reading from the N-terminus, the 369-residue chain is Queuine tRNA-ribosyltransferase accessory subunit 2 (369 aa).

Residues 263 to 282 form a disordered region; sequence SSKLTEVEEENGNDSSNDQD. Positions 308, 310, 313, and 339 each coordinate Zn(2+).

It belongs to the queuine tRNA-ribosyltransferase family. QTRT2 subfamily. As to quaternary structure, heterodimer of a catalytic subunit and an accessory subunit. Requires Zn(2+) as cofactor.

Its subcellular location is the cytoplasm. Functionally, non-catalytic subunit of the queuine tRNA-ribosyltransferase (TGT) that catalyzes the base-exchange of a guanine (G) residue with queuine (Q) at position 34 (anticodon wobble position) in tRNAs with GU(N) anticodons (tRNA-Asp, -Asn, -His and -Tyr), resulting in the hypermodified nucleoside queuosine (7-(((4,5-cis-dihydroxy-2-cyclopenten-1-yl)amino)methyl)-7-deazaguanosine). The chain is Queuine tRNA-ribosyltransferase accessory subunit 2 from Trichoplax adhaerens (Trichoplax reptans).